A 292-amino-acid chain; its full sequence is Ribosomal protein L11 methyltransferase (292 aa).

Thr145, Gly166, Asp188, and Asn229 together coordinate S-adenosyl-L-methionine.

The protein belongs to the methyltransferase superfamily. PrmA family.

It localises to the cytoplasm. The enzyme catalyses L-lysyl-[protein] + 3 S-adenosyl-L-methionine = N(6),N(6),N(6)-trimethyl-L-lysyl-[protein] + 3 S-adenosyl-L-homocysteine + 3 H(+). Its function is as follows. Methylates ribosomal protein L11. This is Ribosomal protein L11 methyltransferase from Nitrosococcus oceani (strain ATCC 19707 / BCRC 17464 / JCM 30415 / NCIMB 11848 / C-107).